We begin with the raw amino-acid sequence, 94 residues long: Putative toxin RelE4 (94 aa).

This sequence belongs to the RelE toxin family.

Its function is as follows. Toxic component of a type II toxin-antitoxin (TA) system. Its cognate antitoxin is RelB4 (Potential). The protein is Putative toxin RelE4 (relE4) of Methanocaldococcus jannaschii (strain ATCC 43067 / DSM 2661 / JAL-1 / JCM 10045 / NBRC 100440) (Methanococcus jannaschii).